Consider the following 85-residue polypeptide: Large ribosomal subunit protein bL27 (85 aa).

The disordered stretch occupies residues 1 to 23 (MAHKKAGGSSRNGRDSESKRLGV).

The protein belongs to the bacterial ribosomal protein bL27 family.

The chain is Large ribosomal subunit protein bL27 from Nitrosococcus oceani (strain ATCC 19707 / BCRC 17464 / JCM 30415 / NCIMB 11848 / C-107).